The following is a 323-amino-acid chain: Porphobilinogen deaminase (323 aa).

Cysteine 251 bears the S-(dipyrrolylmethanemethyl)cysteine mark.

The protein belongs to the HMBS family. In terms of assembly, monomer. It depends on dipyrromethane as a cofactor.

The enzyme catalyses 4 porphobilinogen + H2O = hydroxymethylbilane + 4 NH4(+). The protein operates within porphyrin-containing compound metabolism; protoporphyrin-IX biosynthesis; coproporphyrinogen-III from 5-aminolevulinate: step 2/4. It participates in porphyrin-containing compound metabolism; chlorophyll biosynthesis. Tetrapolymerization of the monopyrrole PBG into the hydroxymethylbilane pre-uroporphyrinogen in several discrete steps. The protein is Porphobilinogen deaminase (hemC) of Nostoc sp. (strain PCC 7120 / SAG 25.82 / UTEX 2576).